Here is a 115-residue protein sequence, read N- to C-terminus: NADH-ubiquinone oxidoreductase chain 3 (115 aa).

At Met1 the chain carries N-formylmethionine. 3 consecutive transmembrane segments (helical) span residues 3 to 23 (LMLA…IAFW), 55 to 75 (FFLV…LLPL), and 84 to 104 (LNTM…SLAY).

Core subunit of respiratory chain NADH dehydrogenase (Complex I) which is composed of 45 different subunits. Interacts with TMEM186. Interacts with TMEM242.

It localises to the mitochondrion inner membrane. It carries out the reaction a ubiquinone + NADH + 5 H(+)(in) = a ubiquinol + NAD(+) + 4 H(+)(out). Functionally, core subunit of the mitochondrial membrane respiratory chain NADH dehydrogenase (Complex I) which catalyzes electron transfer from NADH through the respiratory chain, using ubiquinone as an electron acceptor. Essential for the catalytic activity of complex I. The chain is NADH-ubiquinone oxidoreductase chain 3 from Bos taurus (Bovine).